We begin with the raw amino-acid sequence, 782 residues long: Hypersensitive to pore-forming toxin protein 40 (782 aa).

The Tudor; degenerate domain maps to 138–203 (ESEIVPGAMY…TLFVSDQFSI (66 aa)). 2 stretches are compositionally biased toward polar residues: residues 332–346 (SVNP…SSSM) and 413–443 (FEST…STIQ). 4 disordered regions span residues 332–351 (SVNP…DCPY), 413–448 (FEST…NEED), 472–492 (IERP…NMSE), and 617–672 (VAQG…LEDP). Residues 617–634 (VAQGSNAPKTAPNDSVNS) are compositionally biased toward polar residues. The span at 638 to 662 (DDIHETDKRGNHCKSVTEDPKDNKD) shows a compositional bias: basic and acidic residues.

It is found in the cytoplasm. The protein localises to the perinuclear region. The protein is Hypersensitive to pore-forming toxin protein 40 of Caenorhabditis elegans.